Here is a 1084-residue protein sequence, read N- to C-terminus: MNTGGRLIAGSHNRNEFVLINADESARIRSVQELSGQTCQICGDEIELTVSSELFVACNECAFPVCRPCYEYERREGNQACPQCKTRYKRIKGSPRVDGDDEEEEDIDDLEYEFDHGMDPEHAAEAALSSRLNTGRGGLDSAPPGSQIPLLTYCDEDADMYSDRHALIVPPSTGYGNRVYPAPFTDSSAPPQARSMVPQKDIAEYGYGSVAWKDRMEVWKRRQGEKLQVIKHEGGNNGRGSNDDDELDDPDMPMMDEGRQPLSRKLPIRSSRINPYRMLILCRLAILGLFFHYRILHPVNDAYGLWLTSVICEIWFAVSWILDQFPKWYPIERETYLDRLSLRYEKEGKPSGLAPVDVFVSTVDPLKEPPLITANTVLSILAVDYPVDKVACYVSDDGAAMLTFEALSDTAEFARKWVPFCKKFNIEPRAPEWYFSQKMDYLKNKVHPAFVRERRAMKRDYEEFKVKINALVATAQKVPEEGWTMQDGTPWPGNNVRDHPGMIQVFLGHSGVRDTDGNELPRLVYVSREKRPGFDHHKKAGAMNSLIRVSAVLSNAPYLLNVDCDHYINNSKAIRESMCFMMDPQSGKKVCYVQFPQRFDGIDRHDRYSNRNVVFFDINMKGLDGIQGPIYVGTGCVFRRQALYGFDAPKKKKPPGKTCNCWPKWCCLCCGLRKKSKTKAKDKKTNTKETSKQIHALENVDEGVIVPVSNVEKRSEATQLKLEKKFGQSPVFVASAVLQNGGVPRNASPACLLREAIQVISCGYEDKTEWGKEIGWIYGSVTEDILTGFKMHCHGWRSVYCMPKRAAFKGSAPINLSDRLHQVLRWALGSVEIFLSRHCPIWYGYGGGLKWLERFSYINSVVYPWTSLPLIVYCSLPAVCLLTGKFIVPEISNYAGILFMLMFISIAVTGILEMQWGGVGIDDWWRNEQFWVIGGASSHLFALFQGLLKVLAGVNTNFTVTSKAADDGAFSELYIFKWTTLLIPPTTLLIINIIGVIVGVSDAISNGYDSWGPLFGRLFFALWVIVHLYPFLKGMLGKQDKMPTIIVVWSILLASILTLLWVRVNPFVAKGGPVLEICGLNCGN.

Position 1 is an N-acetylmethionine (methionine 1). Residues 1–278 (MNTGGRLIAG…RSSRINPYRM (278 aa)) are Cytoplasmic-facing. Zn(2+) is bound by residues cysteine 39, cysteine 42, cysteine 58, cysteine 61, cysteine 66, cysteine 69, cysteine 81, and cysteine 84. The segment at 39 to 85 (CQICGDEIELTVSSELFVACNECAFPVCRPCYEYERREGNQACPQCK) adopts an RING-type; degenerate zinc-finger fold. The segment at 230 to 259 (IKHEGGNNGRGSNDDDELDDPDMPMMDEGR) is disordered. Residues 279-299 (LILCRLAILGLFFHYRILHPV) traverse the membrane as a helical segment. Residues 300–301 (ND) are Extracellular-facing. Residues 302-322 (AYGLWLTSVICEIWFAVSWIL) traverse the membrane as a helical segment. Over 323-867 (DQFPKWYPIE…INSVVYPWTS (545 aa)) the chain is Cytoplasmic. UDP-alpha-D-glucose contacts are provided by serine 361, lysine 367, glutamate 368, and aspartate 397. Aspartate 397 is a catalytic residue. Positions 451 to 477 (VRERRAMKRDYEEFKVKINALVATAQK) form a coiled coil. UDP-alpha-D-glucose is bound at residue lysine 538. Residues lysine 539 and aspartate 563 each coordinate Mn(2+). Aspartate 784 is a catalytic residue. A helical membrane pass occupies residues 868 to 888 (LPLIVYCSLPAVCLLTGKFIV). Residues 889–893 (PEISN) are Extracellular-facing. Residues 894–914 (YAGILFMLMFISIAVTGILEM) traverse the membrane as a helical segment. Residues 915-929 (QWGGVGIDDWWRNEQ) are Cytoplasmic-facing. A helical transmembrane segment spans residues 930 to 950 (FWVIGGASSHLFALFQGLLKV). Topologically, residues 951–979 (LAGVNTNFTVTSKAADDGAFSELYIFKWT) are extracellular. Asparagine 957 is a glycosylation site (N-linked (GlcNAc...) asparagine). A helical membrane pass occupies residues 980–1000 (TLLIPPTTLLIINIIGVIVGV). Residues 1001–1011 (SDAISNGYDSW) are Cytoplasmic-facing. A helical transmembrane segment spans residues 1012 to 1032 (GPLFGRLFFALWVIVHLYPFL). Residues 1033–1041 (KGMLGKQDK) lie on the Extracellular side of the membrane. A helical membrane pass occupies residues 1042–1062 (MPTIIVVWSILLASILTLLWV). Over 1063–1084 (RVNPFVAKGGPVLEICGLNCGN) the chain is Cytoplasmic.

This sequence belongs to the glycosyltransferase 2 family. Plant cellulose synthase subfamily. As to quaternary structure, homodimer. Interaction through zinc finger domain. The cofactor is Mn(2+). It depends on Zn(2+) as a cofactor. Strongly and ubiquitously expressed. Localized in some dividing and expanding cells, as well as in vascular tissues.

The protein resides in the cell membrane. It carries out the reaction [(1-&gt;4)-beta-D-glucosyl](n) + UDP-alpha-D-glucose = [(1-&gt;4)-beta-D-glucosyl](n+1) + UDP + H(+). The protein operates within glycan metabolism; plant cellulose biosynthesis. Catalytic subunit of cellulose synthase terminal complexes ('rosettes'), required for beta-1,4-glucan microfibril crystallization, a major mechanism of the cell wall formation. Involved in the primary cell wall formation. The sequence is that of Cellulose synthase A catalytic subunit 2 [UDP-forming] from Arabidopsis thaliana (Mouse-ear cress).